We begin with the raw amino-acid sequence, 73 residues long: Alpha-bungarotoxin N3 (73 aa).

5 disulfides stabilise this stretch: Cys-3–Cys-23, Cys-16–Cys-43, Cys-28–Cys-32, Cys-47–Cys-58, and Cys-59–Cys-64.

This sequence belongs to the three-finger toxin family. Long-chain subfamily. Type II alpha-neurotoxin sub-subfamily. Monomer in solution, homodimer in crystal state. In terms of tissue distribution, expressed by the venom gland.

The protein resides in the secreted. Its function is as follows. Binds with high affinity to muscular (alpha-1/CHRNA1) and neuronal (alpha-7/CHRNA7) nicotinic acetylcholine receptor (nAChR) and inhibits acetylcholine from binding to the receptor, thereby impairing neuromuscular and neuronal transmission. Mice injected with this toxin develop flaccid paralysis followed by death. Irreversibly inhibits twitches in a concentration-dependent manner in rat phrenic nerve-hemidiaphragm and chick biventer cervicis muscle. This is Alpha-bungarotoxin N3 from Bungarus candidus (Malayan krait).